The chain runs to 88 residues: Small ribosomal subunit protein uS17 (88 aa).

It belongs to the universal ribosomal protein uS17 family. As to quaternary structure, part of the 30S ribosomal subunit.

Functionally, one of the primary rRNA binding proteins, it binds specifically to the 5'-end of 16S ribosomal RNA. The sequence is that of Small ribosomal subunit protein uS17 from Oenococcus oeni (strain ATCC BAA-331 / PSU-1).